A 373-amino-acid chain; its full sequence is Queuine tRNA-ribosyltransferase (373 aa).

Catalysis depends on Asp90, which acts as the Proton acceptor. Residues 90-94 (DSGGF), Asp144, Gln193, and Gly220 contribute to the substrate site. The RNA binding stretch occupies residues 251–257 (GVGTPED). Asp270 (nucleophile) is an active-site residue. The RNA binding; important for wobble base 34 recognition stretch occupies residues 275–279 (TRNAR). Zn(2+) contacts are provided by Cys308, Cys310, Cys313, and His339.

The protein belongs to the queuine tRNA-ribosyltransferase family. As to quaternary structure, homodimer. Within each dimer, one monomer is responsible for RNA recognition and catalysis, while the other monomer binds to the replacement base PreQ1. Zn(2+) serves as cofactor.

The catalysed reaction is 7-aminomethyl-7-carbaguanine + guanosine(34) in tRNA = 7-aminomethyl-7-carbaguanosine(34) in tRNA + guanine. It participates in tRNA modification; tRNA-queuosine biosynthesis. Functionally, catalyzes the base-exchange of a guanine (G) residue with the queuine precursor 7-aminomethyl-7-deazaguanine (PreQ1) at position 34 (anticodon wobble position) in tRNAs with GU(N) anticodons (tRNA-Asp, -Asn, -His and -Tyr). Catalysis occurs through a double-displacement mechanism. The nucleophile active site attacks the C1' of nucleotide 34 to detach the guanine base from the RNA, forming a covalent enzyme-RNA intermediate. The proton acceptor active site deprotonates the incoming PreQ1, allowing a nucleophilic attack on the C1' of the ribose to form the product. After dissociation, two additional enzymatic reactions on the tRNA convert PreQ1 to queuine (Q), resulting in the hypermodified nucleoside queuosine (7-(((4,5-cis-dihydroxy-2-cyclopenten-1-yl)amino)methyl)-7-deazaguanosine). This Campylobacter jejuni (strain RM1221) protein is Queuine tRNA-ribosyltransferase.